The sequence spans 493 residues: Ribose import ATP-binding protein RbsA (493 aa).

ABC transporter domains lie at 3 to 239 (IEMK…VGRE) and 246 to 493 (KRTP…TGGR). 35-42 (GENGAGKS) contacts ATP.

Belongs to the ABC transporter superfamily. Ribose importer (TC 3.A.1.2.1) family. As to quaternary structure, the complex is composed of an ATP-binding protein (RbsA), two transmembrane proteins (RbsC) and a solute-binding protein (RbsB).

It is found in the cell membrane. The catalysed reaction is D-ribose(out) + ATP + H2O = D-ribose(in) + ADP + phosphate + H(+). Functionally, part of the ABC transporter complex RbsABC involved in ribose import. Responsible for energy coupling to the transport system. This chain is Ribose import ATP-binding protein RbsA, found in Bacillus subtilis (strain 168).